A 255-amino-acid chain; its full sequence is NAD kinase (255 aa).

Asp44 functions as the Proton acceptor in the catalytic mechanism. NAD(+) is bound by residues 44 to 45 (DG), His49, 114 to 115 (NE), Asp144, Ala152, 155 to 160 (SAYNLS), and Gln216.

Belongs to the NAD kinase family. A divalent metal cation is required as a cofactor.

The protein localises to the cytoplasm. The catalysed reaction is NAD(+) + ATP = ADP + NADP(+) + H(+). Involved in the regulation of the intracellular balance of NAD and NADP, and is a key enzyme in the biosynthesis of NADP. Catalyzes specifically the phosphorylation on 2'-hydroxyl of the adenosine moiety of NAD to yield NADP. This chain is NAD kinase, found in Rickettsia prowazekii (strain Madrid E).